Reading from the N-terminus, the 157-residue chain is Large ribosomal subunit protein uL13m (157 aa).

A mitochondrion-targeting transit peptide spans 1–29 (MSTLNGQTALAYAKVWHHVSAKNVPLGRL).

The protein belongs to the universal ribosomal protein uL13 family. Component of the mitochondrial large ribosomal subunit (mt-LSU). Mature yeast 74S mitochondrial ribosomes consist of a small (37S) and a large (54S) subunit. The 37S small subunit contains a 15S ribosomal RNA (15S mt-rRNA) and at least 32 different proteins. The 54S large subunit contains a 21S rRNA (21S mt-rRNA) and at least 45 different proteins.

The protein localises to the mitochondrion. Its function is as follows. Component of the mitochondrial ribosome (mitoribosome), a dedicated translation machinery responsible for the synthesis of mitochondrial genome-encoded proteins, including at least some of the essential transmembrane subunits of the mitochondrial respiratory chain. The mitoribosomes are attached to the mitochondrial inner membrane and translation products are cotranslationally integrated into the membrane. This Schizosaccharomyces pombe (strain 972 / ATCC 24843) (Fission yeast) protein is Large ribosomal subunit protein uL13m.